The primary structure comprises 244 residues: Small ribosomal subunit protein uS3 (244 aa).

Residues 39–110 (IRDYVRKNLS…QIRINVIEVE (72 aa)) enclose the KH type-2 domain. The interval 215–244 (EDAAPSNVGQPRRRNQQRRRQQFEDRSNEG) is disordered. The span at 225 to 234 (PRRRNQQRRR) shows a compositional bias: basic residues. Residues 235 to 244 (QQFEDRSNEG) show a composition bias toward basic and acidic residues.

The protein belongs to the universal ribosomal protein uS3 family. As to quaternary structure, part of the 30S ribosomal subunit. Forms a tight complex with proteins S10 and S14.

Binds the lower part of the 30S subunit head. Binds mRNA in the 70S ribosome, positioning it for translation. The polypeptide is Small ribosomal subunit protein uS3 (Synechococcus sp. (strain ATCC 27144 / PCC 6301 / SAUG 1402/1) (Anacystis nidulans)).